An 880-amino-acid polypeptide reads, in one-letter code: DNA mismatch repair protein MutS (880 aa).

Gly-624–Ser-631 is an ATP binding site.

The protein belongs to the DNA mismatch repair MutS family.

Its function is as follows. This protein is involved in the repair of mismatches in DNA. It is possible that it carries out the mismatch recognition step. This protein has a weak ATPase activity. The chain is DNA mismatch repair protein MutS from Alkaliphilus metalliredigens (strain QYMF).